We begin with the raw amino-acid sequence, 1023 residues long: Sodium/potassium-transporting ATPase subunit alpha-1 (1023 aa).

A propeptide spanning residues 1-5 is cleaved from the precursor; it reads MGKGV. Residues 1-11 show a composition bias toward basic and acidic residues; sequence MGKGVGRDKYE. Residues 1–39 form a disordered region; that stretch reads MGKGVGRDKYEPAAVSEQGDKKGKKGKKDRDMDELKKEV. Topologically, residues 6 to 87 are cytoplasmic; that stretch reads GRDKYEPAAV…NALTPPPTTP (82 aa). N6-acetyllysine is present on K9. Residue Y10 is modified to Phosphotyrosine. A Phosphoserine modification is found at S16. K21 carries the post-translational modification N6-acetyllysine. Basic and acidic residues predominate over residues 28–39; that stretch reads KDRDMDELKKEV. Residues S40 and S47 each carry the phosphoserine modification. Residues 82–84 are phosphoinositide-3 kinase binding; the sequence is PPP. Residues 88 to 108 traverse the membrane as a helical segment; the sequence is EWIKFCRQLFGGFSMLLWIGA. At 109-131 the chain is on the extracellular side; the sequence is ILCFLAYSIQAATEEEPQNDNLY. Residues 132–152 form a helical membrane-spanning segment; that stretch reads LGVVLSAVVIITGCFSYYQEA. Topologically, residues 153–288 are cytoplasmic; it reads KSSKIMESFK…GGQTPIAAEI (136 aa). The tract at residues 216-235 is disordered; that stretch reads SSLTGESEPQTRSPDFTNEN. S228 is modified (phosphoserine). Residue Y260 is modified to Phosphotyrosine. Residues 289 to 308 traverse the membrane as a helical segment; it reads EHFIHIITGVAVFLGVSFFI. The Extracellular segment spans residues 309–320; sequence LSLILEYTWLEA. A helical transmembrane segment spans residues 321 to 338; sequence VIFLIGIIVANVPEGLLA. Topologically, residues 339-772 are cytoplasmic; it reads TVTVCLTLTA…EEGRLIFDNL (434 aa). The active-site 4-aspartylphosphate intermediate is the D376. Phosphoserine is present on residues S452 and S484. An ATP-binding site is contributed by K487. At Y542 the chain carries Phosphotyrosine. Positions 596–717 are mediates interaction with SCN7A; sequence RAAVPDAVGK…QGAIVAVTGD (122 aa). An N6-succinyllysine modification is found at K661. S668 and S675 each carry phosphoserine. The Mg(2+) site is built by D717 and D721. Residues 773–792 traverse the membrane as a helical segment; that stretch reads KKSIAYTLTSNIPEITPFLI. Residues 793–802 lie on the Extracellular side of the membrane; that stretch reads FIIANIPLPL. The helical transmembrane segment at 803-823 threads the bilayer; sequence GTVTILCIDLGTDMVPAISLA. At 824 to 843 the chain is on the cytoplasmic side; sequence YEQAESDIMKRQPRNPKTDK. The chain crosses the membrane as a helical span at residues 844-866; the sequence is LVNERLISMAYGQIGMIQALGGF. Residues 867–918 lie on the Extracellular side of the membrane; it reads FTYFVILAENGFLPIHLLGLRVDWDDRWINDVEDSYGQQWTYEQRKIVEFTC. The chain crosses the membrane as a helical span at residues 919 to 938; sequence HTAFFVSIVVVQWADLVICK. The Cytoplasmic segment spans residues 939–951; it reads TRRNSVFQQGMKN. A Phosphoserine; by PKA modification is found at S943. A helical transmembrane segment spans residues 952-970; it reads KILIFGLFEETALAAFLSY. Residues 971–985 lie on the Extracellular side of the membrane; the sequence is CPGMGVALRMYPLKP. The helical transmembrane segment at 986 to 1006 threads the bilayer; it reads TWWFCAFPYSLLIFVYDEVRK. The Cytoplasmic segment spans residues 1007–1023; that stretch reads LIIRRRPGGWVEKETYY.

Belongs to the cation transport ATPase (P-type) (TC 3.A.3) family. Type IIC subfamily. As to quaternary structure, the sodium/potassium-transporting ATPase is composed of a catalytic alpha subunit, an auxiliary non-catalytic beta subunit and an additional regulatory subunit. Interacts with regulatory subunit FXYD1. Interacts with regulatory subunit FXYD3. Interacts with SIK1. Binds the HLA class II histocompatibility antigen DR1. Interacts with SLC35G1 and STIM1. Interacts with CLN3; this interaction regulates the sodium/potassium-transporting ATPase complex localization at the plasma membrane. Interacts with SCN7A; activates ATP1A1 P-type sodium:potassium-exchanging transporter activity which indirectly signals to nearby neurons to regulate sodium homeostasis. In terms of processing, phosphorylation on Tyr-10 modulates pumping activity. Phosphorylation of Ser-943 by PKA modulates the response of ATP1A1 to PKC. Dephosphorylation by protein phosphatase 2A (PP2A) following increases in intracellular sodium, leading to increase catalytic activity.

Its subcellular location is the cell membrane. It localises to the basolateral cell membrane. The protein resides in the sarcolemma. The protein localises to the cell projection. It is found in the axon. Its subcellular location is the melanosome. It catalyses the reaction K(+)(out) + Na(+)(in) + ATP + H2O = K(+)(in) + Na(+)(out) + ADP + phosphate + H(+). This is the catalytic component of the active enzyme, which catalyzes the hydrolysis of ATP coupled with the exchange of sodium and potassium ions across the plasma membrane. This action creates the electrochemical gradient of sodium and potassium ions, providing the energy for active transport of various nutrients. Could also be part of an osmosensory signaling pathway that senses body-fluid sodium levels and controls salt intake behavior as well as voluntary water intake to regulate sodium homeostasis. This is Sodium/potassium-transporting ATPase subunit alpha-1 (ATP1A1) from Homo sapiens (Human).